The chain runs to 391 residues: Probable sugar efflux transporter (391 aa).

12 helical membrane passes run Val-16–Leu-36, Val-51–Leu-71, Leu-82–Phe-102, Trp-103–Thr-123, Gln-138–Gly-158, Thr-170–Pro-190, Pro-210–Tyr-230, Val-247–Gly-267, Phe-277–His-297, Trp-300–Leu-320, Ile-338–Ile-358, and Leu-361–Phe-381.

This sequence belongs to the major facilitator superfamily. SotB (TC 2.A.1.2) family.

The protein localises to the cell inner membrane. Functionally, involved in the efflux of sugars. The physiological role may be the reduction of the intracellular concentration of toxic sugars or sugar metabolites. This is Probable sugar efflux transporter from Helicobacter acinonychis (strain Sheeba).